The following is a 502-amino-acid chain: Protein DETOXIFICATION 7 (502 aa).

12 helical membrane passes run 36–56, 68–88, 112–132, 143–163, 182–202, 208–228, 262–282, 291–311, 331–351, 375–395, 408–428, and 436–456; these read MAAP…ISMV, AVAI…VGFA, YSSM…WFFM, PLIS…LFGF, LFVS…LLVY, IVGA…LLWI, AMMI…SGLL, VISI…AIGA, AAVN…TITL, ITPI…LSGV, ASLG…CFVM, and WIGI…VTFF.

This sequence belongs to the multi antimicrobial extrusion (MATE) (TC 2.A.66.1) family.

It localises to the membrane. This Arabidopsis thaliana (Mouse-ear cress) protein is Protein DETOXIFICATION 7.